Reading from the N-terminus, the 76-residue chain is UPF0248 protein MmarC6_0667 (76 aa).

Belongs to the UPF0248 family.

The sequence is that of UPF0248 protein MmarC6_0667 from Methanococcus maripaludis (strain C6 / ATCC BAA-1332).